Reading from the N-terminus, the 510-residue chain is Maturase K (510 aa).

It belongs to the intron maturase 2 family. MatK subfamily.

It is found in the plastid. The protein resides in the chloroplast. In terms of biological role, usually encoded in the trnK tRNA gene intron. Probably assists in splicing its own and other chloroplast group II introns. This is Maturase K from Mammillaria haageana (Cactus).